The sequence spans 278 residues: Undecaprenyl-diphosphatase 3 (278 aa).

A run of 6 helical transmembrane segments spans residues 42–62, 88–108, 119–139, 187–207, 224–244, and 254–274; these read DITAFTAIIQVGAVFATLLYF, YRFGWAVILGSIPIGLVGVAF, LWFVGGALILWSGVMGYADHV, VAVTRLSFFLSIPALMAAAAL, ATIIATVVSFAVAYVAIAWLL, and VFIGYRLALGATVLFLVATGI.

This sequence belongs to the UppP family.

It localises to the cell membrane. The catalysed reaction is di-trans,octa-cis-undecaprenyl diphosphate + H2O = di-trans,octa-cis-undecaprenyl phosphate + phosphate + H(+). Functionally, catalyzes the dephosphorylation of undecaprenyl diphosphate (UPP). Confers resistance to bacitracin. This Frankia casuarinae (strain DSM 45818 / CECT 9043 / HFP020203 / CcI3) protein is Undecaprenyl-diphosphatase 3.